A 527-amino-acid polypeptide reads, in one-letter code: Transcriptional regulator ATRX (527 aa).

Residues 1–527 form a disordered region; the sequence is GRSVVEFGDM…RSYKQKKKRR (527 aa). Residues 14–23 are compositionally biased toward polar residues; that stretch reads RQQSAVSSAG. Basic and acidic residues predominate over residues 27–46; it reads PSGKEENVHSPEDKRVTKSK. Residues 47–59 show a composition bias toward basic residues; it reads EKSKHLRTRTGRK. The span at 60–84 shows a compositional bias: basic and acidic residues; it reads VKSDVTDRFRKKEQSSESSEGEKKQ. Residues Ser-62 and Ser-74 each carry the phosphoserine modification. Basic residues predominate over residues 85–94; that stretch reads GRQRTGTRGK. 4 stretches are compositionally biased toward basic and acidic residues: residues 95–122, 136–145, 152–194, and 204–250; these read KSTD…KLPE, NKNDTTDEAK, DKSC…EKKQ, and KRPE…KEVK. Lys-105 is covalently cross-linked (Glycyl lysine isopeptide (Lys-Gly) (interchain with G-Cter in SUMO2)). A phosphoserine mark is found at Ser-112, Ser-113, and Ser-114. The residue at position 162 (Ser-162) is a Phosphoserine. The residue at position 184 (Arg-184) is a Citrulline. Over residues 267 to 297 the composition is skewed to basic residues; sequence KQKKQRMSAKKKNSNTKERKRKSLRATTTKR. The tract at residues 290-427 is interaction with DAXX; that stretch reads LRATTTKRKQ…SNQVNSESDS (138 aa). Residues Ser-345, Ser-346, and Ser-354 each carry the phosphoserine modification. The span at 368–382 shows a compositional bias: basic and acidic residues; sequence PENRIAKKMLLEEIK. The segment covering 387-398 has biased composition (acidic residues); the sequence is SDEDGSSDDEPK. Over residues 399–410 the composition is skewed to basic and acidic residues; the sequence is EGEKKRIGKQSE. Phosphoserine occurs at positions 423, 425, and 427. Residues 435–446 are compositionally biased toward basic residues; the sequence is PRYRHRLLRHKL. Phosphoserine is present on residues Ser-449 and Ser-453. Basic and acidic residues-rich tracts occupy residues 454 to 469 and 509 to 518; these read GGEK…ETKG and KKAELEENQR.

This sequence belongs to the SNF2/RAD54 helicase family. In terms of assembly, interacts with DAXX to form the chromatin remodeling complex ATRX:DAXX. Probably binds EZH2. Binds annexin V in a calcium and phosphatidylcholine/phosphatidylserine-dependent manner. Interacts directly with CBX5 via the PxVxL motif. Interacts with RAD50, MRE11 and NBN; indicative for an association with the MRN complex. Interacts with histone MACROH2A1. Interacts with histone H3 peptides methylated at 'Lys-10' with preferences H3K9me3 &gt; H3K9me2 &gt; H3K9me1. Interacts with histone H3 peptides unmethylated at 'Lys-5' (H3K4me0). Interacts with MECP2, SMC1 and SMC3. Interacts with SETDB1, TRIM28 and ZNF274. In terms of processing, citrullinated by PADI4.

Its subcellular location is the nucleus. The protein resides in the chromosome. It localises to the telomere. It is found in the PML body. It carries out the reaction ATP + H2O = ADP + phosphate + H(+). In terms of biological role, involved in transcriptional regulation and chromatin remodeling. Facilitates DNA replication in multiple cellular environments and is required for efficient replication of a subset of genomic loci. Binds to DNA tandem repeat sequences in both telomeres and euchromatin and in vitro binds DNA quadruplex structures. May help stabilizing G-rich regions into regular chromatin structures by remodeling G4 DNA and incorporating H3.3-containing nucleosomes. Catalytic component of the chromatin remodeling complex ATRX:DAXX which has ATP-dependent DNA translocase activity and catalyzes the replication-independent deposition of histone H3.3 in pericentric DNA repeats outside S-phase and telomeres, and the in vitro remodeling of H3.3-containing nucleosomes. Its heterochromatin targeting is proposed to involve a combinatorial readout of histone H3 modifications (specifically methylation states of H3K9 and H3K4) and association with CBX5. Involved in maintaining telomere structural integrity in embryonic stem cells probably implying recruitment of CBX5 to telomeres. May be involved in transcriptional regulation of telomeric repeat-containing RNA (TERRA). Acts as a negative regulator of chromatin incorporation of transcriptionally repressive histone MACROH2A1, particularily at telomeres. Participates in the allele-specific gene expression at the imprinted IGF2/H19 gene locus. On the maternal allele, required for the chromatin occupancy of SMC1 and CTCTF within the H19 imprinting control region (ICR) and involved in esatblishment of histone tails modifications in the ICR. Binds to zinc-finger coding genes with atypical chromatin signatures and regulates its H3K9me3 levels. Forms a complex with ZNF274, TRIM28 and SETDB1 to facilitate the deposition and maintenance of H3K9me3 at the 3' exons of zinc-finger genes. In Rattus norvegicus (Rat), this protein is Transcriptional regulator ATRX (Atrx).